The following is a 246-amino-acid chain: Pyridoxine 5'-phosphate synthase (246 aa).

Residue Asn12 participates in 3-amino-2-oxopropyl phosphate binding. 1-deoxy-D-xylulose 5-phosphate is bound at residue 14–15; the sequence is DH. Residue Arg23 coordinates 3-amino-2-oxopropyl phosphate. His48 acts as the Proton acceptor in catalysis. 1-deoxy-D-xylulose 5-phosphate is bound by residues Arg50 and His55. Glu75 functions as the Proton acceptor in the catalytic mechanism. Thr105 serves as a coordination point for 1-deoxy-D-xylulose 5-phosphate. Catalysis depends on His196, which acts as the Proton donor. Residues Gly197 and 218–219 contribute to the 3-amino-2-oxopropyl phosphate site; that span reads GH.

It belongs to the PNP synthase family. As to quaternary structure, homooctamer; tetramer of dimers.

It is found in the cytoplasm. It carries out the reaction 3-amino-2-oxopropyl phosphate + 1-deoxy-D-xylulose 5-phosphate = pyridoxine 5'-phosphate + phosphate + 2 H2O + H(+). The protein operates within cofactor biosynthesis; pyridoxine 5'-phosphate biosynthesis; pyridoxine 5'-phosphate from D-erythrose 4-phosphate: step 5/5. In terms of biological role, catalyzes the complicated ring closure reaction between the two acyclic compounds 1-deoxy-D-xylulose-5-phosphate (DXP) and 3-amino-2-oxopropyl phosphate (1-amino-acetone-3-phosphate or AAP) to form pyridoxine 5'-phosphate (PNP) and inorganic phosphate. This is Pyridoxine 5'-phosphate synthase from Pseudomonas savastanoi pv. phaseolicola (strain 1448A / Race 6) (Pseudomonas syringae pv. phaseolicola (strain 1448A / Race 6)).